We begin with the raw amino-acid sequence, 311 residues long: Phosphoribosylamine--glycine ligase (311 aa).

The ATP-grasp domain occupies 1-191 (DPRVRKQYIQ…LVQVLLAACR (191 aa)).

It belongs to the GARS family.

The protein resides in the plastid. The protein localises to the chloroplast. It catalyses the reaction 5-phospho-beta-D-ribosylamine + glycine + ATP = N(1)-(5-phospho-beta-D-ribosyl)glycinamide + ADP + phosphate + H(+). Its pathway is purine metabolism; IMP biosynthesis via de novo pathway; N(1)-(5-phospho-D-ribosyl)glycinamide from 5-phospho-alpha-D-ribose 1-diphosphate: step 2/2. This is Phosphoribosylamine--glycine ligase (PUR2) from Vigna unguiculata (Cowpea).